The sequence spans 203 residues: N-(5'-phosphoribosyl)anthranilate isomerase (203 aa).

The protein belongs to the TrpF family.

The catalysed reaction is N-(5-phospho-beta-D-ribosyl)anthranilate = 1-(2-carboxyphenylamino)-1-deoxy-D-ribulose 5-phosphate. The protein operates within amino-acid biosynthesis; L-tryptophan biosynthesis; L-tryptophan from chorismate: step 3/5. The sequence is that of N-(5'-phosphoribosyl)anthranilate isomerase from Sulfurihydrogenibium sp. (strain YO3AOP1).